Here is an 85-residue protein sequence, read N- to C-terminus: Small ribosomal subunit protein uS17 (85 aa).

The protein belongs to the universal ribosomal protein uS17 family. As to quaternary structure, part of the 30S ribosomal subunit.

Its function is as follows. One of the primary rRNA binding proteins, it binds specifically to the 5'-end of 16S ribosomal RNA. The chain is Small ribosomal subunit protein uS17 from Geobacter metallireducens (strain ATCC 53774 / DSM 7210 / GS-15).